The primary structure comprises 400 residues: Ubiquitin-like modifier-activating enzyme 5 (400 aa).

ATP-binding residues include glycine 76, aspartate 97, lysine 120, asparagine 143, and asparagine 177. 2 residues coordinate Zn(2+): cysteine 219 and cysteine 222. Cysteine 243 functions as the Glycyl thioester intermediate in the catalytic mechanism. The Zn(2+) site is built by cysteine 296 and cysteine 301.

The protein belongs to the ubiquitin-activating E1 family. UBA5 subfamily.

Its function is as follows. E1-like enzyme which activates UFM1. This Drosophila virilis (Fruit fly) protein is Ubiquitin-like modifier-activating enzyme 5.